A 558-amino-acid polypeptide reads, in one-letter code: Glutamine--tRNA ligase (558 aa).

The 'HIGH' region signature appears at 34 to 44 (PEPNGYLHIGH). ATP is bound by residues 35-37 (EPN) and 41-47 (HIGHAKS). 2 residues coordinate L-glutamine: aspartate 67 and tyrosine 212. Residues threonine 231, 261–262 (RL), and 269–271 (LSK) contribute to the ATP site. The 'KMSKS' region signature appears at 268 to 272 (VLSKR).

It belongs to the class-I aminoacyl-tRNA synthetase family. Monomer.

The protein localises to the cytoplasm. The enzyme catalyses tRNA(Gln) + L-glutamine + ATP = L-glutaminyl-tRNA(Gln) + AMP + diphosphate. This chain is Glutamine--tRNA ligase, found in Pseudoalteromonas atlantica (strain T6c / ATCC BAA-1087).